The chain runs to 524 residues: B3 domain-containing protein Os07g0183700 (524 aa).

Disordered regions lie at residues 94–152 (DGEG…TSVS) and 191–232 (PLQP…FQTQ). A compositionally biased stretch (pro residues) spans 100 to 109 (CAPPPSPIPA). Composition is skewed to low complexity over residues 110 to 124 (GPAS…SAPA) and 200 to 232 (AAAA…FQTQ). A DNA-binding region (TF-B3) is located at residues 336–434 (SFVKPLTYTD…EMFMAVRRTR (99 aa)).

Its subcellular location is the nucleus. The polypeptide is B3 domain-containing protein Os07g0183700 (Oryza sativa subsp. japonica (Rice)).